The chain runs to 148 residues: Macrodomain Ter protein (148 aa).

The protein belongs to the MatP family. Homodimer.

It localises to the cytoplasm. Required for spatial organization of the terminus region of the chromosome (Ter macrodomain) during the cell cycle. Prevents early segregation of duplicated Ter macrodomains during cell division. Binds specifically to matS, which is a 13 bp signature motif repeated within the Ter macrodomain. This Pasteurella multocida (strain Pm70) protein is Macrodomain Ter protein.